Consider the following 370-residue polypeptide: MHLESIVLRNFRNYENLELEFSPSVNVFLGENAQGKTNLLEAVLMLALAKSHRTTNDKDFIMWEKEEAKMEGRIAKHGQSVPLELAITQKGKRAKVNHLEQKKLSQYVGNLNVVIFAPEDLSLVKGAPGIRRRFLNMEIGQMQPIYLHNLSEYQRILQQRNQYLKMLQMKRKVDPILLDILTEQFADVAINLTKRRADFIQKLEAYAAPIHHQISRGLETLKIEYKASITLNGDDPEVWKADLLQKMESIKQREIDRGVTLIGPHRDDSLFYINGQNVQDFGSQGQQRTTALSIKLAEIDLIHEETGEYPVLLLDDVLSELDDYRQSHLLGAIEGKVQTFVTTTSTSGIDHETLKQATTFYVEKGTVKKS.

30–37 (GENAQGKT) serves as a coordination point for ATP.

Belongs to the RecF family.

The protein resides in the cytoplasm. Functionally, the RecF protein is involved in DNA metabolism; it is required for DNA replication and normal SOS inducibility. RecF binds preferentially to single-stranded, linear DNA. It also seems to bind ATP. The polypeptide is DNA replication and repair protein RecF (Listeria monocytogenes serotype 4b (strain CLIP80459)).